The following is a 607-amino-acid chain: Phosphoenolpyruvate carboxykinase [GTP] (607 aa).

Substrate is bound by residues Arg-81 and 221–223 (YGG). The Mn(2+) site is built by Lys-230 and His-250. A substrate-binding site is contributed by Ser-272. 273-278 (ACGKTN) is a GTP binding site. Cys-274 is an active-site residue. Residue Asp-297 coordinates Mn(2+). 388–390 (NSR) provides a ligand contact to substrate. Residues Arg-390, Arg-421, and 516 to 519 (FGDN) each bind GTP.

It belongs to the phosphoenolpyruvate carboxykinase [GTP] family. In terms of assembly, monomer. Requires Mn(2+) as cofactor.

Its subcellular location is the cytoplasm. The catalysed reaction is oxaloacetate + GTP = phosphoenolpyruvate + GDP + CO2. Its pathway is carbohydrate biosynthesis; gluconeogenesis. Its function is as follows. Catalyzes the conversion of oxaloacetate (OAA) to phosphoenolpyruvate (PEP), the rate-limiting step in the metabolic pathway that produces glucose from lactate and other precursors derived from the citric acid cycle. The sequence is that of Phosphoenolpyruvate carboxykinase [GTP] from Renibacterium salmoninarum (strain ATCC 33209 / DSM 20767 / JCM 11484 / NBRC 15589 / NCIMB 2235).